A 427-amino-acid chain; its full sequence is Serine--tRNA ligase (427 aa).

231–233 (TAE) contributes to the L-serine binding site. Residue 262 to 264 (RSE) participates in ATP binding. L-serine is bound at residue E285. 349-352 (EISS) provides a ligand contact to ATP. L-serine is bound at residue S385.

Belongs to the class-II aminoacyl-tRNA synthetase family. Type-1 seryl-tRNA synthetase subfamily. Homodimer. The tRNA molecule binds across the dimer.

The protein resides in the cytoplasm. The catalysed reaction is tRNA(Ser) + L-serine + ATP = L-seryl-tRNA(Ser) + AMP + diphosphate + H(+). It catalyses the reaction tRNA(Sec) + L-serine + ATP = L-seryl-tRNA(Sec) + AMP + diphosphate + H(+). The protein operates within aminoacyl-tRNA biosynthesis; selenocysteinyl-tRNA(Sec) biosynthesis; L-seryl-tRNA(Sec) from L-serine and tRNA(Sec): step 1/1. Its function is as follows. Catalyzes the attachment of serine to tRNA(Ser). Is also able to aminoacylate tRNA(Sec) with serine, to form the misacylated tRNA L-seryl-tRNA(Sec), which will be further converted into selenocysteinyl-tRNA(Sec). This Listeria welshimeri serovar 6b (strain ATCC 35897 / DSM 20650 / CCUG 15529 / CIP 8149 / NCTC 11857 / SLCC 5334 / V8) protein is Serine--tRNA ligase.